The following is a 1092-amino-acid chain: Isoleucine--tRNA ligase (1092 aa).

Residues 53 to 63 carry the 'HIGH' region motif; sequence PFANGLPHYGH. A 'KMSKS' region motif is present at residues 613-617; that stretch reads KLSKR. K616 is a binding site for ATP.

This sequence belongs to the class-I aminoacyl-tRNA synthetase family. IleS type 2 subfamily. As to quaternary structure, monomer. It depends on Zn(2+) as a cofactor.

It is found in the cytoplasm. The catalysed reaction is tRNA(Ile) + L-isoleucine + ATP = L-isoleucyl-tRNA(Ile) + AMP + diphosphate. Catalyzes the attachment of isoleucine to tRNA(Ile). As IleRS can inadvertently accommodate and process structurally similar amino acids such as valine, to avoid such errors it has two additional distinct tRNA(Ile)-dependent editing activities. One activity is designated as 'pretransfer' editing and involves the hydrolysis of activated Val-AMP. The other activity is designated 'posttransfer' editing and involves deacylation of mischarged Val-tRNA(Ile). The chain is Isoleucine--tRNA ligase from Rickettsia africae (strain ESF-5).